We begin with the raw amino-acid sequence, 316 residues long: MENFPIINLEKLNGAERVATMEKINDACENWGFFELVNHGIPHEVMDTVEKLTKGHYKKCMEQRFKELVAKKGLEGVEVEVTDMDWESTFFLRHLPSSNISQLPDLDDVYREVMRDFRKRLEKLAEELLDLLCENLGLEKSYLKNTFYGSKGPNFGTKVSNYPPCPKPDLIKGLRAHTDAGGIILLFQDDKVSGLQLLKDGRWIDVPPMRHSIVVNLGDQLEVITNGKYKSVMHRVIAQKDGTRMSLASFYNPGNDALIYPAPALVDKEAEEHNKQVYPKFMFDDYMKLYANLKFQAKEPRFEAMKAMESDPIAIA.

A Fe2OG dioxygenase domain is found at 153–253 (PNFGTKVSNY…RMSLASFYNP (101 aa)). Residues histidine 177, aspartate 179, and histidine 234 each contribute to the Fe cation site.

This sequence belongs to the iron/ascorbate-dependent oxidoreductase family. Fe cation serves as cofactor. In terms of tissue distribution, leaves.

The enzyme catalyses 1-aminocyclopropane-1-carboxylate + L-ascorbate + O2 = ethene + L-dehydroascorbate + hydrogen cyanide + CO2 + 2 H2O. Its pathway is alkene biosynthesis; ethylene biosynthesis via S-adenosyl-L-methionine; ethylene from S-adenosyl-L-methionine: step 2/2. The protein is 1-aminocyclopropane-1-carboxylate oxidase 2 (ACO2) of Solanum lycopersicum (Tomato).